A 310-amino-acid polypeptide reads, in one-letter code: Probable manganese-dependent inorganic pyrophosphatase (310 aa).

Positions 9, 13, 15, 76, 98, and 150 each coordinate Mn(2+).

Belongs to the PPase class C family. It depends on Mn(2+) as a cofactor.

The protein resides in the cytoplasm. The enzyme catalyses diphosphate + H2O = 2 phosphate + H(+). This chain is Probable manganese-dependent inorganic pyrophosphatase, found in Streptococcus thermophilus (strain ATCC BAA-491 / LMD-9).